The following is a 481-amino-acid chain: MQAKLTKNEFIEWLKTSEGKQFNVDLWYGFQCFDYANAGWKVLFGLLLKGLGAKDIPFANNFDGLATVYQNTPDFLAQPGDMVVFGSNYGAGYGHVAWVIEATLDYIIVYEQNWLGGGWTDGIEQPGWGWEKVTRRQHAYDFPMWFIRPNFKSETAPRSVQSPTQAPKKETAKPQPKAVELKIIKDVVKGYDLPKRGSNPKGIVIHNDAGSKGATAEAYRNGLVNAPLSRLEAGIAHSYVSGNTVWQALDESQVGWHTANQIGNKYYYGIEVCQSMGADNATFLKNEQATFQECARLLKKWGLPANRNTIRLHNEFTSTSCPHRSSVLHTGFDPVTRGLLPEDKRLQLKDYFIKQIRAYMDGKIPVATVSNESSASSNTVKPVASAWKRNKYGTYYMEESARFTNGNQPITVRKVGPFLSCPVGYQFQPGGYCDYTEVMLQDGHVWVGYTWEGQRYYLPIRTWNGSAPPNQILGDLWGEIS.

The region spanning 7 to 148 (KNEFIEWLKT…AYDFPMWFIR (142 aa)) is the Peptidase C51 domain. The segment covering 155-165 (TAPRSVQSPTQ) has biased composition (polar residues). Residues 155–177 (TAPRSVQSPTQAPKKETAKPQPK) are disordered. In terms of domain architecture, N-acetylmuramoyl-L-alanine amidase spans 198–323 (SNPKGIVIHN…NEFTSTSCPH (126 aa)). The region spanning 398–466 (EESARFTNGN…YLPIRTWNGS (69 aa)) is the SH3b domain.

This sequence belongs to the N-acetylmuramoyl-L-alanine amidase 2 family.

The catalysed reaction is Hydrolyzes the link between N-acetylmuramoyl residues and L-amino acid residues in certain cell-wall glycopeptides.. Its function is as follows. Has weak lytic activity toward S.aureus cells. The sequence is that of Probable autolysin LytO from Staphylococcus aureus (strain NCTC 8325 / PS 47).